We begin with the raw amino-acid sequence, 428 residues long: Adenylosuccinate synthetase (428 aa).

Residues 12–18 (GDEGKGK) and 40–42 (GHT) contribute to the GTP site. The Proton acceptor role is filled by aspartate 13. Residues aspartate 13 and glycine 40 each coordinate Mg(2+). IMP contacts are provided by residues 13–16 (DEGK), 38–41 (NAGH), threonine 130, arginine 144, glutamine 225, threonine 240, and arginine 304. The active-site Proton donor is the histidine 41. 300–306 (VTTGRSR) contributes to the substrate binding site. GTP contacts are provided by residues arginine 306, 332-334 (KID), and 414-416 (GVG).

This sequence belongs to the adenylosuccinate synthetase family. As to quaternary structure, homodimer. Mg(2+) is required as a cofactor.

It is found in the cytoplasm. The catalysed reaction is IMP + L-aspartate + GTP = N(6)-(1,2-dicarboxyethyl)-AMP + GDP + phosphate + 2 H(+). The protein operates within purine metabolism; AMP biosynthesis via de novo pathway; AMP from IMP: step 1/2. Plays an important role in the de novo pathway of purine nucleotide biosynthesis. Catalyzes the first committed step in the biosynthesis of AMP from IMP. This Clostridium botulinum (strain Eklund 17B / Type B) protein is Adenylosuccinate synthetase.